A 431-amino-acid chain; its full sequence is MIERYTLPEMGKIWTDTYKLQTWLDVEIAVCEAQAELGYIPQAAVDEIKAKAKFDPQRVLEIEAEVRHDVIAFLTNVNEYVGDAGRYIHLGLTSSDVLDTALALQLVASLDLILEQLEKLIQAIRYQAQQHRYTVMVGRSHGIHAEPITFGFKLAGWLAEVLRNRDRLVRVAQSIAVGKISGAVGTYANIDPKVEAIACQKLGLEPDTASTQVISRDRHAEYVQQLALLAASLERFAVEIRNLQRTDVLEVEEYFSKGQKGSSAMPHKRNPIRSERLTGMARLVRGHAVAALENVALWHERDISHSSVERVAFPDCCILTHFMLKETTDLVKNLLVYPENMKRNMNVYGGVIFSQKVLLALVEKGMNREDAYRVVQGSAHQAWNTEGGNFEELVRADAQVTALLSAEEIDQCFDPQQHLTNLAEIYSRLDI.

N(6)-(1,2-dicarboxyethyl)-AMP is bound by residues 4 to 5 (RY), 67 to 69 (RHD), and 93 to 94 (TS). The active-site Proton donor/acceptor is histidine 141. Glutamine 212 is a N(6)-(1,2-dicarboxyethyl)-AMP binding site. Residue serine 262 is the Proton donor/acceptor of the active site. Residues serine 263, 268 to 270 (KRN), and 307 to 311 (SVERV) each bind N(6)-(1,2-dicarboxyethyl)-AMP.

Belongs to the lyase 1 family. Adenylosuccinate lyase subfamily. As to quaternary structure, homooligomer. Residues from neighboring subunits contribute catalytic and substrate-binding residues to each active site.

It carries out the reaction N(6)-(1,2-dicarboxyethyl)-AMP = fumarate + AMP. The catalysed reaction is (2S)-2-[5-amino-1-(5-phospho-beta-D-ribosyl)imidazole-4-carboxamido]succinate = 5-amino-1-(5-phospho-beta-D-ribosyl)imidazole-4-carboxamide + fumarate. It participates in purine metabolism; AMP biosynthesis via de novo pathway; AMP from IMP: step 2/2. The protein operates within purine metabolism; IMP biosynthesis via de novo pathway; 5-amino-1-(5-phospho-D-ribosyl)imidazole-4-carboxamide from 5-amino-1-(5-phospho-D-ribosyl)imidazole-4-carboxylate: step 2/2. Catalyzes two reactions in de novo purine nucleotide biosynthesis. Catalyzes the breakdown of 5-aminoimidazole- (N-succinylocarboxamide) ribotide (SAICAR or 2-[5-amino-1-(5-phospho-beta-D-ribosyl)imidazole-4-carboxamido]succinate) to 5-aminoimidazole-4-carboxamide ribotide (AICAR or 5-amino-1-(5-phospho-beta-D-ribosyl)imidazole-4-carboxamide) and fumarate, and of adenylosuccinate (ADS or N(6)-(1,2-dicarboxyethyl)-AMP) to adenosine monophosphate (AMP) and fumarate. The polypeptide is Adenylosuccinate lyase (purB) (Synechocystis sp. (strain ATCC 27184 / PCC 6803 / Kazusa)).